Reading from the N-terminus, the 538-residue chain is Chaperonin GroEL 1 (538 aa).

ATP-binding positions include Thr-29–Pro-32, Asp-86–Thr-90, Gly-413, Asn-478–Ala-480, and Asp-494.

This sequence belongs to the chaperonin (HSP60) family. As to quaternary structure, forms a cylinder of 14 subunits composed of two heptameric rings stacked back-to-back. Interacts with the co-chaperonin GroES.

It localises to the cytoplasm. The catalysed reaction is ATP + H2O + a folded polypeptide = ADP + phosphate + an unfolded polypeptide.. In terms of biological role, together with its co-chaperonin GroES, plays an essential role in assisting protein folding. The GroEL-GroES system forms a nano-cage that allows encapsulation of the non-native substrate proteins and provides a physical environment optimized to promote and accelerate protein folding. The protein is Chaperonin GroEL 1 of Corynebacterium glutamicum (strain ATCC 13032 / DSM 20300 / JCM 1318 / BCRC 11384 / CCUG 27702 / LMG 3730 / NBRC 12168 / NCIMB 10025 / NRRL B-2784 / 534).